Here is a 459-residue protein sequence, read N- to C-terminus: Exodeoxyribonuclease 7 large subunit (459 aa).

The protein belongs to the XseA family. In terms of assembly, heterooligomer composed of large and small subunits.

It is found in the cytoplasm. It catalyses the reaction Exonucleolytic cleavage in either 5'- to 3'- or 3'- to 5'-direction to yield nucleoside 5'-phosphates.. Functionally, bidirectionally degrades single-stranded DNA into large acid-insoluble oligonucleotides, which are then degraded further into small acid-soluble oligonucleotides. The polypeptide is Exodeoxyribonuclease 7 large subunit (Pseudomonas putida (strain ATCC 47054 / DSM 6125 / CFBP 8728 / NCIMB 11950 / KT2440)).